A 355-amino-acid polypeptide reads, in one-letter code: Polyferredoxin protein FwdF (355 aa).

8 4Fe-4S ferredoxin-type domains span residues 24–53, 64–93, 108–137, 147–176, 187–216, 235–264, 267–296, and 304–333; these read RELCWNDELCVGCGICADICPVNAIAMGPL, PKLDIDKDVCVLCGMCASACPFDALDLKIN, RDIKVYQDKCVLCEQCEMVCPQGAIVVERE, GEININKEKCVLCGICAEYCPADAINLKYN, TDIEVDKDKCVFCKVCEFVCPHDAIEVICY, GKTVIDKDACVTCGWCAFICPAEAIEVEKP, GELIIDVNACNACGACISICPCSALEFPKP, and PRIIVNQNLCVLCGACAKACPVNAIKVKRT. [4Fe-4S] cluster-binding residues include cysteine 33, cysteine 36, cysteine 39, cysteine 43, cysteine 73, cysteine 76, cysteine 79, cysteine 83, cysteine 117, cysteine 120, cysteine 123, cysteine 127, cysteine 156, cysteine 159, cysteine 162, cysteine 166, cysteine 196, cysteine 199, cysteine 202, cysteine 206, cysteine 244, cysteine 247, cysteine 250, cysteine 254, cysteine 276, cysteine 279, cysteine 282, cysteine 286, cysteine 313, cysteine 316, cysteine 319, and cysteine 323.

[4Fe-4S] cluster serves as cofactor.

In Methanocaldococcus jannaschii (strain ATCC 43067 / DSM 2661 / JAL-1 / JCM 10045 / NBRC 100440) (Methanococcus jannaschii), this protein is Polyferredoxin protein FwdF (fwdF).